A 333-amino-acid chain; its full sequence is Biotin synthase (333 aa).

The Radical SAM core domain maps to 47-276; that stretch reads YYGKKVKLNM…TKEIRISGGR (230 aa). Residues cysteine 65, cysteine 69, and cysteine 72 each coordinate [4Fe-4S] cluster. 4 residues coordinate [2Fe-2S] cluster: cysteine 109, cysteine 141, cysteine 201, and arginine 271.

The protein belongs to the radical SAM superfamily. Biotin synthase family. As to quaternary structure, homodimer. [4Fe-4S] cluster is required as a cofactor. It depends on [2Fe-2S] cluster as a cofactor.

It carries out the reaction (4R,5S)-dethiobiotin + (sulfur carrier)-SH + 2 reduced [2Fe-2S]-[ferredoxin] + 2 S-adenosyl-L-methionine = (sulfur carrier)-H + biotin + 2 5'-deoxyadenosine + 2 L-methionine + 2 oxidized [2Fe-2S]-[ferredoxin]. It participates in cofactor biosynthesis; biotin biosynthesis; biotin from 7,8-diaminononanoate: step 2/2. In terms of biological role, catalyzes the conversion of dethiobiotin (DTB) to biotin by the insertion of a sulfur atom into dethiobiotin via a radical-based mechanism. The protein is Biotin synthase of Bacillus licheniformis (strain ATCC 14580 / DSM 13 / JCM 2505 / CCUG 7422 / NBRC 12200 / NCIMB 9375 / NCTC 10341 / NRRL NRS-1264 / Gibson 46).